Consider the following 424-residue polypeptide: Gamma-glutamyl phosphate reductase (424 aa).

The protein belongs to the gamma-glutamyl phosphate reductase family.

Its subcellular location is the cytoplasm. It catalyses the reaction L-glutamate 5-semialdehyde + phosphate + NADP(+) = L-glutamyl 5-phosphate + NADPH + H(+). It participates in amino-acid biosynthesis; L-proline biosynthesis; L-glutamate 5-semialdehyde from L-glutamate: step 2/2. Catalyzes the NADPH-dependent reduction of L-glutamate 5-phosphate into L-glutamate 5-semialdehyde and phosphate. The product spontaneously undergoes cyclization to form 1-pyrroline-5-carboxylate. The sequence is that of Gamma-glutamyl phosphate reductase from Shewanella sediminis (strain HAW-EB3).